The following is a 23-amino-acid chain: Ocellatin-LB2 (23 aa).

Asparagine amide is present on Asn23.

Expressed by the skin glands.

It is found in the secreted. Its function is as follows. Antibacterial peptide that inhibits the Gram-negative bacterium A.actinomycetemcomitans ATCC 29522 (MIC=210 uM). No activity against the bacteria E.coli ATCC 25922 and S.aureus ATCC 25923, or the fungi C.albicans ATCC 18804 and C.lusitaniae ATCC 56936. Does not show hemolytic activity towards rabbit erythrocytes. The protein is Ocellatin-LB2 of Leptodactylus labyrinthicus (Labyrinth frog).